The primary structure comprises 243 residues: DNA repair protein RecO (243 aa).

Belongs to the RecO family.

Functionally, involved in DNA repair and RecF pathway recombination. This Serratia proteamaculans (strain 568) protein is DNA repair protein RecO.